The chain runs to 151 residues: UPF0178 protein YaiI (151 aa).

This sequence belongs to the UPF0178 family.

This is UPF0178 protein YaiI from Salmonella paratyphi B (strain ATCC BAA-1250 / SPB7).